The following is a 340-amino-acid chain: MIAARAANLQVAMKALALAVLALAYAAATARAEQCGRQAGGARCPNRLCCSRWGWCGLTDDYCKGGCQSQCRVSRDGGDDDVAAVLLTAPGGGRAGVASVVTSDQFERMLPHRDDAACPARGFYAYRAFVAAAGAFPAFAATGDADTRKREVAAFLAQTSHATSGGPYSWGYCYKEVKGATSDFCVPNARWPCAPGKAYHARGPMQIAYNYNYGAAGEAIGADLLGNPELVATDPTVAFKTALWLWMTARSPSQPSPHAVVTGQWTPTPADSAAGRAPGYGLTTNILTGGLQCAGGNGGADRVAFYKRYCDVLGVGYGPNLDCFGQAPFDGDIMSASAAK.

The N-terminal stretch at 1–32 (MIAARAANLQVAMKALALAVLALAYAAATARA) is a signal peptide. One can recognise a Chitin-binding type-1 domain in the interval 33 to 73 (EQCGRQAGGARCPNRLCCSRWGWCGLTDDYCKGGCQSQCRV). Disulfide bonds link cysteine 35/cysteine 50, cysteine 44/cysteine 56, cysteine 49/cysteine 63, cysteine 67/cysteine 71, cysteine 118/cysteine 173, cysteine 185/cysteine 193, and cysteine 293/cysteine 323.

Belongs to the glycosyl hydrolase 19 family. Chitinase class I subfamily. Expressed in pistils, stamens and lodicules.

The enzyme catalyses Random endo-hydrolysis of N-acetyl-beta-D-glucosaminide (1-&gt;4)-beta-linkages in chitin and chitodextrins.. Hydrolyzes chitin and may play a role in defense against fungal pathogens containing chitin. This Oryza sativa subsp. japonica (Rice) protein is Chitinase 7 (Cht7).